The sequence spans 411 residues: MDKLLDRFFNYVSFDTQAKANVKSVPSTQGQRKLAQALQQELLTLGFSHVTLSDHGCVMATLPANVSWPVPTIGFIAHLDTSPDFSGKNVNPQIVENYRGGDIALGIGDEVLSPVMFPVLHQLLGHTLITTDGKTLLGADDKAGIAEIITAMVRLKHRNVPHGDIRIAFTPDEEVGKGAQFFNVAEFDAQWAYTVDGGGIGELEFENFNAASVAIKIVGNNVHPGSAKGVMVNALSLATRYHQELPVDETPECTEGYDGFYHLQSIKGTVERAEMHYIVRDFNRDSFEARKKNMVDIAKRVGKGLHRDCYIEIVIDDSYYNMREQIIKHPHIIELAQQAMLDCDITPIMKPIRGGTDGAQLSFKGLPCPNIFTGGYNYHGKHEFITLEGMEKAVAVIMRISELTAKRAKEL.

Residue His-78 participates in Zn(2+) binding. Asp-80 is a catalytic residue. Asp-140 serves as a coordination point for Zn(2+). Glu-173 serves as the catalytic Proton acceptor. Positions 174, 196, and 379 each coordinate Zn(2+).

Belongs to the peptidase M20B family. Requires Zn(2+) as cofactor.

The protein localises to the cytoplasm. The catalysed reaction is Release of the N-terminal residue from a tripeptide.. Its function is as follows. Cleaves the N-terminal amino acid of tripeptides. The protein is Peptidase T of Yersinia pseudotuberculosis serotype O:1b (strain IP 31758).